A 314-amino-acid polypeptide reads, in one-letter code: Ribonuclease Z (314 aa).

Positions 62, 64, 66, 67, 144, 215, and 273 each coordinate Zn(2+). Catalysis depends on Asp66, which acts as the Proton acceptor.

The protein belongs to the RNase Z family. In terms of assembly, homodimer. The cofactor is Zn(2+).

The enzyme catalyses Endonucleolytic cleavage of RNA, removing extra 3' nucleotides from tRNA precursor, generating 3' termini of tRNAs. A 3'-hydroxy group is left at the tRNA terminus and a 5'-phosphoryl group is left at the trailer molecule.. Functionally, zinc phosphodiesterase, which displays some tRNA 3'-processing endonuclease activity. Probably involved in tRNA maturation, by removing a 3'-trailer from precursor tRNA. The polypeptide is Ribonuclease Z (Prochlorococcus marinus (strain NATL2A)).